A 333-amino-acid polypeptide reads, in one-letter code: Glyceraldehyde-3-phosphate dehydrogenase 1 (333 aa).

Residues R12 to I13, D35, and R79 contribute to the NAD(+) site. Residues S152 to T154, T183, R198, S211 to G212, and R234 each bind D-glyceraldehyde 3-phosphate. C153 serves as the catalytic Nucleophile. N314 contributes to the NAD(+) binding site.

This sequence belongs to the glyceraldehyde-3-phosphate dehydrogenase family. In terms of assembly, homotetramer.

It localises to the cytoplasm. It carries out the reaction D-glyceraldehyde 3-phosphate + phosphate + NAD(+) = (2R)-3-phospho-glyceroyl phosphate + NADH + H(+). Its pathway is carbohydrate degradation; glycolysis; pyruvate from D-glyceraldehyde 3-phosphate: step 1/5. Its activity is regulated as follows. Resistant to pentalenolactone (PL). Catalyzes the oxidative phosphorylation of glyceraldehyde 3-phosphate (G3P) to 1,3-bisphosphoglycerate (BPG) using the cofactor NAD. The first reaction step involves the formation of a hemiacetal intermediate between G3P and a cysteine residue, and this hemiacetal intermediate is then oxidized to a thioester, with concomitant reduction of NAD to NADH. The reduced NADH is then exchanged with the second NAD, and the thioester is attacked by a nucleophilic inorganic phosphate to produce BPG. The chain is Glyceraldehyde-3-phosphate dehydrogenase 1 (gap1) from Streptomyces arenae.